A 209-amino-acid polypeptide reads, in one-letter code: MPKGILGRKVGMTQIFTEDGRAIPVTVIEAGPCVVVQKKTIANDGYNAIQLGFGEIKESKVNKPLKGHFNRANVKPMRYLREIRVENIDAYEVGQEIKVDIFTVGEKVDVTGISKGKGFAGGIKRHGFHRGPMAHGSKYHRRPGSLGAKGPARVFLGRKLPGRLGMERVTIQNLEVVKVDPERNLLVIKGSVPGIRGSLLIIKEAVKGK.

This sequence belongs to the universal ribosomal protein uL3 family. Part of the 50S ribosomal subunit. Forms a cluster with proteins L14 and L19.

One of the primary rRNA binding proteins, it binds directly near the 3'-end of the 23S rRNA, where it nucleates assembly of the 50S subunit. The protein is Large ribosomal subunit protein uL3 of Carboxydothermus hydrogenoformans (strain ATCC BAA-161 / DSM 6008 / Z-2901).